We begin with the raw amino-acid sequence, 350 residues long: tRNA pseudouridine synthase D (350 aa).

Residue Phe27 coordinates substrate. Asp80 (nucleophile) is an active-site residue. Asn129 lines the substrate pocket. In terms of domain architecture, TRUD spans 155-303 (GVPNYFGVQR…VDTTRRAINL (149 aa)). Phe329 provides a ligand contact to substrate.

It belongs to the pseudouridine synthase TruD family.

It carries out the reaction uridine(13) in tRNA = pseudouridine(13) in tRNA. In terms of biological role, responsible for synthesis of pseudouridine from uracil-13 in transfer RNAs. The sequence is that of tRNA pseudouridine synthase D from Proteus mirabilis (strain HI4320).